Consider the following 400-residue polypeptide: Formate-dependent phosphoribosylglycinamide formyltransferase (400 aa).

N(1)-(5-phospho-beta-D-ribosyl)glycinamide contacts are provided by residues 22-23 (EL) and E82. ATP-binding positions include R115, K156, 161 to 166 (SSGKGQ), 196 to 199 (EGFI), and E204. The ATP-grasp domain maps to 120-309 (RLAAETLGLP…EFALHARAIL (190 aa)). Mg(2+)-binding residues include E268 and E280. Residues D287, K361, and 368 to 369 (RR) each bind N(1)-(5-phospho-beta-D-ribosyl)glycinamide.

The protein belongs to the PurK/PurT family. As to quaternary structure, homodimer.

The catalysed reaction is N(1)-(5-phospho-beta-D-ribosyl)glycinamide + formate + ATP = N(2)-formyl-N(1)-(5-phospho-beta-D-ribosyl)glycinamide + ADP + phosphate + H(+). Its pathway is purine metabolism; IMP biosynthesis via de novo pathway; N(2)-formyl-N(1)-(5-phospho-D-ribosyl)glycinamide from N(1)-(5-phospho-D-ribosyl)glycinamide (formate route): step 1/1. Involved in the de novo purine biosynthesis. Catalyzes the transfer of formate to 5-phospho-ribosyl-glycinamide (GAR), producing 5-phospho-ribosyl-N-formylglycinamide (FGAR). Formate is provided by PurU via hydrolysis of 10-formyl-tetrahydrofolate. This chain is Formate-dependent phosphoribosylglycinamide formyltransferase, found in Xanthomonas campestris pv. campestris (strain 8004).